The sequence spans 32 residues: Acyclotide phyb-M (32 aa).

Glutamine 1 carries the post-translational modification Pyrrolidone carboxylic acid. Cystine bridges form between cysteine 5/cysteine 21, cysteine 9/cysteine 23, and cysteine 14/cysteine 28.

Contains 3 disulfide bonds. As to expression, expressed in midvein, lamina and periphery of leaves (at protein level).

Functionally, probably participates in a plant defense mechanism. This Petunia hybrida (Petunia) protein is Acyclotide phyb-M.